The sequence spans 297 residues: N-acetylmuramic acid 6-phosphate etherase (297 aa).

The SIS domain occupies 56-219 (AIEAFNKGGR…STISMIGIGK (164 aa)). Glu84 serves as the catalytic Proton donor. Residue Glu115 is part of the active site.

The protein belongs to the GCKR-like family. MurNAc-6-P etherase subfamily. Homodimer.

It carries out the reaction N-acetyl-D-muramate 6-phosphate + H2O = N-acetyl-D-glucosamine 6-phosphate + (R)-lactate. It functions in the pathway amino-sugar metabolism; N-acetylmuramate degradation. Specifically catalyzes the cleavage of the D-lactyl ether substituent of MurNAc 6-phosphate, producing GlcNAc 6-phosphate and D-lactate. This chain is N-acetylmuramic acid 6-phosphate etherase, found in Lactococcus lactis subsp. lactis (strain IL1403) (Streptococcus lactis).